Consider the following 338-residue polypeptide: Ketol-acid reductoisomerase (NADP(+)) (338 aa).

In terms of domain architecture, KARI N-terminal Rossmann spans Met1–Thr181. NADP(+) contacts are provided by residues Tyr24 to Gln27, Lys47, Ser50, Ser52, and Asp82 to Gln85. His107 is a catalytic residue. Position 133 (Gly133) interacts with NADP(+). The KARI C-terminal knotted domain occupies Ser182–Ile327. Residues Asp190, Glu194, Glu226, and Glu230 each contribute to the Mg(2+) site. Ser251 serves as a coordination point for substrate.

It belongs to the ketol-acid reductoisomerase family. Mg(2+) serves as cofactor.

The enzyme catalyses (2R)-2,3-dihydroxy-3-methylbutanoate + NADP(+) = (2S)-2-acetolactate + NADPH + H(+). It carries out the reaction (2R,3R)-2,3-dihydroxy-3-methylpentanoate + NADP(+) = (S)-2-ethyl-2-hydroxy-3-oxobutanoate + NADPH + H(+). The protein operates within amino-acid biosynthesis; L-isoleucine biosynthesis; L-isoleucine from 2-oxobutanoate: step 2/4. It functions in the pathway amino-acid biosynthesis; L-valine biosynthesis; L-valine from pyruvate: step 2/4. Functionally, involved in the biosynthesis of branched-chain amino acids (BCAA). Catalyzes an alkyl-migration followed by a ketol-acid reduction of (S)-2-acetolactate (S2AL) to yield (R)-2,3-dihydroxy-isovalerate. In the isomerase reaction, S2AL is rearranged via a Mg-dependent methyl migration to produce 3-hydroxy-3-methyl-2-ketobutyrate (HMKB). In the reductase reaction, this 2-ketoacid undergoes a metal-dependent reduction by NADPH to yield (R)-2,3-dihydroxy-isovalerate. In Geotalea uraniireducens (strain Rf4) (Geobacter uraniireducens), this protein is Ketol-acid reductoisomerase (NADP(+)).